Here is a 266-residue protein sequence, read N- to C-terminus: Protein SCO2 homolog, mitochondrial (266 aa).

The transit peptide at 1–41 (MLLLTRSPTAWHRLSQLKPRVLPGTLGGQALHLRSWLLSRQ) directs the protein to the mitochondrion. Topologically, residues 42–60 (GPAETGGQGQPQGPGLRTR) are mitochondrial matrix. Residues 61–78 (LLITGLFGAGLGGAWLAL) traverse the membrane as a helical segment. Topologically, residues 79–266 (RAEKERLQQQ…HMAAFRSVLS (188 aa)) are mitochondrial intermembrane. The Thioredoxin domain occupies 85–259 (LQQQKRTEAL…ISDSVRRHMA (175 aa)). Cu cation contacts are provided by Cys-133, Cys-137, and His-224. Cysteines 133 and 137 form a disulfide.

Belongs to the SCO1/2 family. Homodimer. Interacts with COA6. Found in a complex with TMEM177, COX20, COA6, MT-CO2/COX2, COX18 and SCO1. Interacts with TMEM177 in a COX20-dependent manner. Interacts with COX20 in a MT-CO2/COX2- and COX18-dependent manner. Interacts with COX16. As to expression, ubiquitous.

Its subcellular location is the mitochondrion inner membrane. Its function is as follows. Copper metallochaperone essential for the synthesis and maturation of cytochrome c oxidase subunit II (MT-CO2/COX2) by facilitating the incorporation of copper into the Cu(A) site of MT-CO2/COX2. Could also act as a thiol-disulfide oxidoreductase to regulate the redox state of the cysteines in SCO1 during maturation of MT-CO2/COX2. The sequence is that of Protein SCO2 homolog, mitochondrial (SCO2) from Homo sapiens (Human).